The following is a 374-amino-acid chain: Putative F-box protein At3g17480 (374 aa).

Positions 6 to 52 constitute an F-box domain; that stretch reads SSPMSVLTEDLVEDILSRVPATSLVRLRSTCKQWNAILNDRRFIKKH.

In Arabidopsis thaliana (Mouse-ear cress), this protein is Putative F-box protein At3g17480.